Consider the following 828-residue polypeptide: Phenylalanine--tRNA ligase beta subunit (828 aa).

In terms of domain architecture, tRNA-binding spans 43 to 161 (LSKNTNLVVG…DQIALGSNAL (119 aa)). The segment at 203–230 (KKKEKKTINYKTKNSKDQTNRKTTPKLN) is disordered. Residues 436–519 (RTNPTISLDL…RFYGCHKLPP (84 aa)) enclose the B5 domain. Mg(2+) contacts are provided by Asp497, Asp503, and Asp507. An FDX-ACB domain is found at 736-828 (PKFPTVIRDL…LIKHFRIEIR (93 aa)).

This sequence belongs to the phenylalanyl-tRNA synthetase beta subunit family. Type 1 subfamily. In terms of assembly, tetramer of two alpha and two beta subunits. The cofactor is Mg(2+).

The protein localises to the cytoplasm. The catalysed reaction is tRNA(Phe) + L-phenylalanine + ATP = L-phenylalanyl-tRNA(Phe) + AMP + diphosphate + H(+). The polypeptide is Phenylalanine--tRNA ligase beta subunit (Aster yellows witches'-broom phytoplasma (strain AYWB)).